We begin with the raw amino-acid sequence, 146 residues long: Transcriptional regulator MraZ (146 aa).

SpoVT-AbrB domains are found at residues 9–55 and 81–124; these read ASAL…PRPA and AMDV…DVQR.

This sequence belongs to the MraZ family. In terms of assembly, forms oligomers.

The protein localises to the cytoplasm. It is found in the nucleoid. The sequence is that of Transcriptional regulator MraZ from Methylibium petroleiphilum (strain ATCC BAA-1232 / LMG 22953 / PM1).